Consider the following 154-residue polypeptide: Probable archaeosortase D (154 aa).

A run of 4 helical transmembrane segments spans residues Ala-6–Leu-26, Ile-57–Ile-77, Tyr-91–Ile-111, and Val-125–Leu-145. Cys-64 functions as the Acyl-thioester intermediate in the catalytic mechanism. The Proton donor role is filled by Arg-106.

It belongs to the exosortase/archaeosortase family. Archaeosortase D subfamily.

Its subcellular location is the cell membrane. Its function is as follows. Transpeptidase that recognizes and modifies its substrate by proteolytic cleavage of a sorting signal. Following cleavage, a covalent intermediate is formed via a thioester bond between the archaeosortase and its substrate, which is then transferred and covalently attached to the cell membrane. In Methanocaldococcus jannaschii (strain ATCC 43067 / DSM 2661 / JAL-1 / JCM 10045 / NBRC 100440) (Methanococcus jannaschii), this protein is Probable archaeosortase D.